The primary structure comprises 2912 residues: Fibrillin-2 (2912 aa).

The N-terminal stretch at 1–28 (MGRRRRLCLQLYFLWLGCVVLWAQGTAG) is a signal peptide. A disordered region spans residues 27–52 (AGQPQPPPPKPPRPQPPPQQVRSATA). A propeptide spanning residues 29–77 (QPQPPPPKPPRPQPPPQQVRSATAGSEGGFLAPEYREEGAAVASRVRRR) is cleaved from the precursor. A compositionally biased stretch (pro residues) spans 30-45 (PQPPPPKPPRPQPPPQ). 3 consecutive EGF-like domains span residues 111-142 (IVPI…STCG), 145-176 (SIQQ…TYCG), and 176-208 (GQPV…PQCE). Disulfide bonds link C115–C124, C119–C130, C132–C141, C149–C159, C153–C164, C166–C175, C180–C190, C184–C196, and C198–C207. Residues 149–359 (CSVRCMNGGT…VTSTDGSRCI (211 aa)) are interaction with MFAP4. Residues 214-266 (GPCFTQVNNQMCQGQLTGIVCTKTLCCATIGRAWGHPCEMCPAQPQPCRRGFI) form the TB 1 domain. Residues 276–317 (DVDECQAIPGICQGGNCINTVGSFECRCPAGHKQSETTQKCE) form the EGF-like 4; calcium-binding domain. 6 disulfides stabilise this stretch: C280–C292, C287–C301, C303–C316, C322–C334, C329–C343, and C345–C358. Residue S298 is glycosylated (O-linked (Glc) serine). The 42-residue stretch at 318–359 (DIDECSIIPGICETGECSNTVGSYFCVCPRGYVTSTDGSRCI) folds into the EGF-like 5; calcium-binding domain. O-linked (Glc) serine glycosylation occurs at S340. In terms of domain architecture, TB 2 spans 364–417 (GMCFSGLVNGRCAQELPGRMTKMQCCCEPGRCWGIGTIPEACPVRGSEEYRRLC). N492 carries an N-linked (GlcNAc...) asparagine glycan. Residues 494-534 (TIDICKHHANLCLNGRCIPTVSSYRCECNMGYKQDANGDCI) enclose the EGF-like 6 domain. Disulfide bonds link C498-C510, C505-C519, C521-C533, C539-C549, C544-C558, C560-C573, C579-C591, C586-C600, C602-C615, C621-C632, C627-C641, C643-C656, C662-C673, C668-C682, and C684-C697. O-linked (Glc) serine glycosylation occurs at S516. The 40-residue stretch at 535–574 (DVDECTSNPCTNGDCVNTPGSYYCKCHAGFQRTPTKQACI) folds into the EGF-like 7; calcium-binding domain. A glycan (O-linked (Glc) serine) is linked at S555. The EGF-like 8; calcium-binding domain occupies 575–616 (DIDECIQNGVLCKNGRCVNTDGSFQCICNAGFELTTDGKNCV). S597 carries an O-linked (Glc) serine glycan. The EGF-like 9; calcium-binding domain occupies 617-657 (DHDECTTTNMCLNGMCINEDGSFKCICKPGFVLAPNGRYCT). O-linked (Glc) serine glycosylation is present at S638. Residues 658–698 (DVDECQTPGICMNGHCINSEGSFRCDCPPGLAVGMDGRVCV) form the EGF-like 10; calcium-binding domain. S679 carries an O-linked (Glc) serine glycan. The TB 3 domain maps to 704–756 (STCYGGIKKGVCVRPFPGAVTKSECCCANPDYGFGEPCQPCPAKNSAEFHGLC). The 42-residue stretch at 768 to 809 (DINECALDPDICANGICENLRGSYRCNCNSGYEPDASGRNCI) folds into the EGF-like 11; calcium-binding domain. 9 disulfide bridges follow: C772/C784, C779/C793, C795/C808, C814/C826, C821/C835, C837/C850, C856/C866, C861/C875, and C877/C890. Residues 810–851 (DIDECLVNRLLCDNGLCRNTPGSYSCTCPPGYVFRTETETCE) enclose the EGF-like 12; calcium-binding domain. S832 carries O-linked (Glc) serine glycosylation. In terms of domain architecture, EGF-like 13; calcium-binding spans 852–891 (DINECESNPCVNGACRNNLGSFNCECSPGSKLSSTGLICI). S872 carries O-linked (Glc) serine glycosylation. Residues 896-947 (GTCWLNIQDSRCEVNINGATLKSECCATLGAAWGSPCERCELDTACPRGLAR) enclose the TB 4 domain. The region spanning 955–996 (DVNECEVFPGVCPNGRCVNSKGSFHCECPEGLTLDGTGRVCL) is the EGF-like 14; calcium-binding domain. Cystine bridges form between C959–C971, C966–C980, and C982–C995. S977 carries an O-linked (Glc) serine glycan. The TB 5 domain maps to 1001–1052 (EQCYLKWDEDECIHPVPGKFRMDACCCAVGAAWGTECEECPKPGTKEYETLC). The EGF-like 15; calcium-binding domain maps to 1073 to 1114 (DINECKAFPGMCTYGKCRNTIGSFKCRCNSGFALDMEERNCT). 36 disulfides stabilise this stretch: C1077-C1089, C1084-C1098, C1100-C1113, C1119-C1131, C1126-C1140, C1142-C1156, C1162-C1174, C1169-C1183, C1185-C1198, C1204-C1216, C1211-C1225, C1227-C1240, C1246-C1257, C1253-C1266, C1268-C1281, C1287-C1299, C1294-C1308, C1310-C1323, C1329-C1341, C1336-C1350, C1352-C1365, C1371-C1384, C1378-C1393, C1395-C1406, C1412-C1425, C1419-C1434, C1436-C1447, C1453-C1465, C1460-C1474, C1476-C1489, C1495-C1506, C1501-C1515, C1517-C1530, C1536-C1547, C1542-C1556, and C1558-C1571. O-linked (Glc) serine glycosylation is present at S1095. N1112 carries an N-linked (GlcNAc...) asparagine glycan. The region spanning 1115-1157 (DIDECRISPDLCGSGICVNTPGSFECECFEGYESGFMMMKNCM) is the EGF-like 16; calcium-binding domain. An EGF-like 17; calcium-binding domain is found at 1158-1199 (DIDECERNPLLCRGGTCVNTEGSFQCDCPLGHELSPSREDCV). Residue S1180 is glycosylated (O-linked (Glc) serine). Residues 1200–1241 (DINECSLSDNLCRNGKCVNMIGTYQCSCNPGYQATPDRQGCT) form the EGF-like 18; calcium-binding domain. T1222 is a glycosylation site (O-linked (Glc) threonine). Residues 1242–1282 (DIDECMIMNGGCDTQCTNSEGSYECSCSEGYALMPDGRSCA) form the EGF-like 19; calcium-binding domain. The O-linked (Glc) serine glycan is linked to S1263. One can recognise an EGF-like 20; calcium-binding domain in the interval 1283 to 1324 (DIDECENNPDICDGGQCTNIPGEYRCLCYDGFMASMDMKTCI). Residues 1325–1366 (DVNECDLNSNICMFGECENTKGSFICHCQLGYSVKKGTTGCT) enclose the EGF-like 21; calcium-binding domain. The O-linked (Glc) serine glycan is linked to S1347. Residues 1367-1407 (DVDECEIGAHNCDMHASCLNIPGSFKCSCREGWIGNGIKCI) form the EGF-like 22; calcium-binding domain. O-linked (Glc) serine glycosylation is present at S1390. Positions 1408–1448 (DLDECSNGTHQCSINAQCVNTPGSYRCACSEGFTGDGFTCS) constitute an EGF-like 23; calcium-binding domain. A glycan (N-linked (GlcNAc...) asparagine) is linked at N1414. Positions 1449-1490 (DVDECAENINLCENGQCLNVPGAYRCECEMGFTPASDSRSCQ) constitute an EGF-like 24; calcium-binding domain. Residues 1491–1531 (DIDECSFQNICVFGTCNNLPGMFHCICDDGYELDRTGGNCT) enclose the EGF-like 25; calcium-binding domain. The N-linked (GlcNAc...) asparagine glycan is linked to N1529. An EGF-like 26; calcium-binding domain is found at 1532-1572 (DIDECADPINCVNGLCVNTPGRYECNCPPDFQLNPTGVGCV). The TB 6 domain occupies 1577–1633 (GNCYLKFGPRGDGSLSCNTEIGVGVSRSSCCCSLGKAWGNPCETCPPVNSTEYYTLC). Residue N1625 is glycosylated (N-linked (GlcNAc...) asparagine). The EGF-like 27; calcium-binding domain maps to 1650 to 1691 (DIDECQELPGLCQGGNCINTFGSFQCECPQGYYLSEDTRICE). Intrachain disulfides connect C1654-C1666, C1661-C1675, C1677-C1690, C1696-C1708, C1703-C1717, and C1719-C1732. An O-linked (Glc) serine glycan is attached at S1672. An EGF-like 28; calcium-binding domain is found at 1692–1733 (DIDECFAHPGVCGPGTCYNTLGNYTCICPPEYMQVNGGHNCM). N1714 is a glycosylation site (N-linked (GlcNAc...) asparagine). The tract at residues 1735–2171 (MRKSFCYRSY…VPSLHDTRED (437 aa)) is interaction with MFAP4. A TB 7 domain is found at 1738 to 1791 (SFCYRSYNGTTCENELPFNVTKRMCCCTYNVGKAWNKPCEPCPTPGTADFKTIC). N-linked (GlcNAc...) asparagine glycans are attached at residues N1745 and N1756. In terms of domain architecture, EGF-like 29; calcium-binding spans 1808 to 1849 (DIDECKEIPGICANGVCINQIGSFRCECPTGFSYNDLLLVCE). 21 cysteine pairs are disulfide-bonded: C1812/C1824, C1819/C1833, C1835/C1848, C1854/C1867, C1861/C1876, C1878/C1890, C1896/C1908, C1903/C1917, C1919/C1932, C1938/C1948, C1943/C1957, C1959/C1971, C1977/C1990, C1985/C1999, C2001/C2014, C2020/C2032, C2027/C2041, C2043/C2054, C2060/C2072, C2067/C2081, and C2083/C2096. The EGF-like 30; calcium-binding domain maps to 1850 to 1891 (DIDECSNGDNLCQRNADCINSPGSYRCECAAGFKLSPNGACV). S1873 carries an O-linked (Glc) serine glycan. Residues 1892–1933 (DRNECLEIPNVCSHGLCVDLQGSYQCICHNGFKASQDQTMCM) enclose the EGF-like 31; calcium-binding domain. Residues 1934–1972 (DVDECERHPCGNGTCKNTVGSYNCLCYPGFELTHNNDCL) form the EGF-like 32; calcium-binding domain. Residue N1945 is glycosylated (N-linked (GlcNAc...) asparagine). S1954 carries O-linked (Glc) serine glycosylation. In terms of domain architecture, EGF-like 33; calcium-binding spans 1973 to 2015 (DIDECSSFFGQVCRNGRCFNEIGSFKCLCNEGYELTPDGKNCI). S1996 carries O-linked (Glc) serine glycosylation. The region spanning 2016-2055 (DTNECVALPGSCSPGTCQNLEGSFRCICPPGYEVKSENCI) is the EGF-like 34; calcium-binding domain. One can recognise an EGF-like 35; calcium-binding domain in the interval 2056 to 2097 (DINECDEDPNICLFGSCTNTPGGFQCLCPPGFVLSDNGRRCF). Residues 2102-2155 (SFCFTNFENGKCSVPKAFNTTKAKCCCSKMPGEGWGDPCELCPKDDEVAFQDLC) enclose the TB 8 domain. Residue N2120 is glycosylated (N-linked (GlcNAc...) asparagine). Positions 2171–2212 (DVNECLESPGICSNGQCINTDGSFRCECPMGYNLDYTGVRCV) constitute an EGF-like 36; calcium-binding domain. 15 disulfides stabilise this stretch: C2175–C2187, C2182–C2196, C2198–C2211, C2217–C2228, C2223–C2237, C2239–C2251, C2257–C2268, C2264–C2277, C2279–C2292, C2298–C2312, C2305–C2321, C2323–C2336, C2342–C2354, C2349–C2363, and C2365–C2378. Residue S2193 is glycosylated (O-linked (Glc) serine). The 40-residue stretch at 2213-2252 (DTDECSIGNPCGNGTCTNVIGSFECNCNEGFEPGPMMNCE) folds into the EGF-like 37; calcium-binding domain. Residue N2225 is glycosylated (N-linked (GlcNAc...) asparagine). In terms of domain architecture, EGF-like 38; calcium-binding spans 2253-2293 (DINECAQNPLLCAFRCMNTFGSYECTCPIGYALREDQKMCK). An O-linked (Glc) serine glycan is attached at S2274. In terms of domain architecture, EGF-like 39; calcium-binding spans 2294 to 2337 (DLDECAEGLHDCESRGMMCKNLIGTFMCICPPGMARRPDGEGCV). One can recognise an EGF-like 40; calcium-binding domain in the interval 2338 to 2379 (DENECRTKPGICENGRCVNIIGSYRCECNEGFQSSSSGTECL). S2360 is a glycosylation site (O-linked (Glc) serine). Residues 2384-2437 (GLCFAEVLQTICQMASSSRNLVTKSECCCDGGRGWGHQCELCPLPGTAQYKKIC) enclose the TB 9 domain. The 42-residue stretch at 2449-2490 (DIDECKVMPNLCTNGQCINTMGSFRCFCKVGYTTDISGTSCI) folds into the EGF-like 41; calcium-binding domain. 21 cysteine pairs are disulfide-bonded: C2453/C2465, C2460/C2474, C2476/C2489, C2495/C2506, C2502/C2515, C2517/C2530, C2536/C2547, C2543/C2556, C2558/C2569, C2575/C2588, C2582/C2597, C2599/C2612, C2618/C2628, C2624/C2637, C2639/C2652, C2658/C2669, C2664/C2678, C2680/C2693, C2699/C2710, C2706/C2719, and C2721/C2733. An O-linked (Glc) serine glycan is attached at S2471. One can recognise an EGF-like 42; calcium-binding domain in the interval 2491–2531 (DLDECSQSPKPCNYICKNTEGSYQCSCPRGYVLQEDGKTCK). S2512 is a glycosylation site (O-linked (Glc) serine). The 39-residue stretch at 2532–2570 (DLDECQTKQHNCQFLCVNTLGGFTCKCPPGFTQHHTACI) folds into the EGF-like 43; calcium-binding domain. The 43-residue stretch at 2571 to 2613 (DNNECGSQPSLCGAKGICQNTPGSFSCECQRGFSLDATGLNCE) folds into the EGF-like 44; calcium-binding domain. S2594 carries an O-linked (Glc) serine glycan. Positions 2614–2653 (DVDECDGNHRCQHGCQNILGGYRCGCPQGYIQHYQWNQCV) constitute an EGF-like 45; calcium-binding domain. In terms of domain architecture, EGF-like 46; calcium-binding spans 2654-2694 (DENECSNPNACGSASCYNTLGSYKCACPSGFSFDQFSSACH). S2675 is a glycosylation site (O-linked (Glc) serine). In terms of domain architecture, EGF-like 47; calcium-binding spans 2695 to 2734 (DVNECSSSKNPCNYGCSNTEGGYLCGCPPGYYRVGQGHCV). An N-linked (GlcNAc...) asparagine glycan is attached at N2808.

It belongs to the fibrillin family. As to quaternary structure, interacts with BMP2, BMP4, BMP7, BMP10 and GDF5. Interacts with MFAP2 and MFAP5. Interacts with ADAMTSL5. Interacts with MFAP4. N-glycosylated. Post-translationally, O-glycosylated on serine residues by POGLUT2 and POGLUT3. Almost exclusively expressed in placenta. Expressed at much lower level in other tissues. Expressed in fetal eye (18 weeks)in the retinal pigment epithelium (RPE), the choroid, Bruch's membrane and in the sclera. Not expressed in the neural retina. In terms of tissue distribution, present at high level in cytotrophoblasts as compared with syncytiotrophoblasts at 8-9 weeks of pregnancy (at protein level). Levels in the serum increase during pregnancy (at protein level).

It is found in the secreted. It localises to the extracellular space. The protein localises to the extracellular matrix. Fibrillins are structural components of 10-12 nm extracellular calcium-binding microfibrils, which occur either in association with elastin or in elastin-free bundles. Fibrillin-2-containing microfibrils regulate the early process of elastic fiber assembly. Regulates osteoblast maturation by controlling TGF-beta bioavailability and calibrating TGF-beta and BMP levels, respectively. Its function is as follows. Hormone secreted by trophoblasts that promotes trophoblast invasiveness. Has glucogenic activity: is able to increase plasma glucose levels. In Homo sapiens (Human), this protein is Fibrillin-2.